Reading from the N-terminus, the 327-residue chain is Tagatose 1,6-diphosphate aldolase 2 (327 aa).

This sequence belongs to the aldolase LacD family.

The catalysed reaction is D-tagatofuranose 1,6-bisphosphate = D-glyceraldehyde 3-phosphate + dihydroxyacetone phosphate. Its pathway is carbohydrate metabolism; D-tagatose 6-phosphate degradation; D-glyceraldehyde 3-phosphate and glycerone phosphate from D-tagatose 6-phosphate: step 2/2. This is Tagatose 1,6-diphosphate aldolase 2 (lacD2) from Streptococcus pyogenes serotype M1.